The chain runs to 401 residues: Argininosuccinate synthase (401 aa).

9–17 (AYSGGLDTS) contributes to the ATP binding site. Tyrosine 86 lines the L-citrulline pocket. An ATP-binding site is contributed by glycine 116. Positions 118, 122, and 123 each coordinate L-aspartate. Asparagine 122 contributes to the L-citrulline binding site. 5 residues coordinate L-citrulline: arginine 126, serine 174, serine 183, glutamate 259, and tyrosine 271.

It belongs to the argininosuccinate synthase family. Type 1 subfamily. Homotetramer.

It localises to the cytoplasm. The catalysed reaction is L-citrulline + L-aspartate + ATP = 2-(N(omega)-L-arginino)succinate + AMP + diphosphate + H(+). It participates in amino-acid biosynthesis; L-arginine biosynthesis; L-arginine from L-ornithine and carbamoyl phosphate: step 2/3. This Bacillus cereus (strain AH820) protein is Argininosuccinate synthase.